Here is a 1665-residue protein sequence, read N- to C-terminus: Mediator of RNA polymerase II transcription subunit 13 (1665 aa).

Disordered regions lie at residues 411–460 (KETE…IDKN), 482–512 (INLD…ETKP), 551–580 (TVSQ…GTET), and 673–781 (LDSS…NQIS). The segment covering 415–445 (PENESENDMEIDDLFGGDESDDNDDLEEAGN) has biased composition (acidic residues). Over residues 499–512 (VPDKENFKPKETKP) the composition is skewed to basic and acidic residues. Residues 551 to 568 (TVSQSAVTTNPPSVGSAP) show a composition bias toward low complexity. A compositionally biased stretch (acidic residues) spans 682–720 (EGGEDIEDDDNDYEDEGDDDEEEEGEEEEEEESDEDEIS). A compositionally biased stretch (polar residues) spans 728–762 (LKLNTQNESVPPQQSNYNPVNITDSGSNTTNNITD).

It belongs to the Mediator complex subunit 13 family. As to quaternary structure, component of the SRB8-11 complex, which itself associates with the Mediator complex.

Its subcellular location is the nucleus. Its function is as follows. Component of the SRB8-11 complex. The SRB8-11 complex is a regulatory module of the Mediator complex which is itself involved in regulation of basal and activated RNA polymerase II-dependent transcription. The SRB8-11 complex may be involved in the transcriptional repression of a subset of genes regulated by Mediator. It may inhibit the association of the Mediator complex with RNA polymerase II to form the holoenzyme complex. The sequence is that of Mediator of RNA polymerase II transcription subunit 13 (SSN2) from Candida albicans (strain SC5314 / ATCC MYA-2876) (Yeast).